The primary structure comprises 169 residues: Cilia- and flagella-associated protein 276 (169 aa).

Disordered regions lie at residues 26 to 45 (SKKL…EPWS) and 150 to 169 (HTAA…FFST). The span at 36–45 (HLAQQQEPWS) shows a compositional bias: polar residues. Positions 160-169 (RKKDGGFFST) are enriched in basic and acidic residues.

Microtubule inner protein component of sperm flagellar doublet microtubules. In terms of tissue distribution, expressed in cerebrum, cerebellum, gastrocnemius muscle, spinal cord and lung tissues.

The protein resides in the cytoplasm. The protein localises to the cytoskeleton. Its subcellular location is the flagellum axoneme. It localises to the cilium axoneme. Functionally, microtubule inner protein (MIP) part of the dynein-decorated doublet microtubules (DMTs) in cilia axoneme, which is required for motile cilia beating. May play an important role for the maintenance of myelin-axon integrity. May affect intracellular Ca(2+) homeostasis. The protein is Cilia- and flagella-associated protein 276 of Homo sapiens (Human).